Reading from the N-terminus, the 444-residue chain is Xylose isomerase (444 aa).

Residues histidine 101 and aspartate 104 contribute to the active site. Mg(2+) contacts are provided by glutamate 232, glutamate 268, histidine 271, aspartate 296, aspartate 307, aspartate 309, and aspartate 339.

The protein belongs to the xylose isomerase family. In terms of assembly, homotetramer. It depends on Mg(2+) as a cofactor.

Its subcellular location is the cytoplasm. The catalysed reaction is alpha-D-xylose = alpha-D-xylulofuranose. The sequence is that of Xylose isomerase from Thermotoga maritima (strain ATCC 43589 / DSM 3109 / JCM 10099 / NBRC 100826 / MSB8).